Here is a 104-residue protein sequence, read N- to C-terminus: Co-chaperonin GroES (104 aa).

The protein belongs to the GroES chaperonin family. As to quaternary structure, heptamer of 7 subunits arranged in a ring. Interacts with the chaperonin GroEL.

Its subcellular location is the cytoplasm. Functionally, together with the chaperonin GroEL, plays an essential role in assisting protein folding. The GroEL-GroES system forms a nano-cage that allows encapsulation of the non-native substrate proteins and provides a physical environment optimized to promote and accelerate protein folding. GroES binds to the apical surface of the GroEL ring, thereby capping the opening of the GroEL channel. This chain is Co-chaperonin GroES, found in Acidiphilium cryptum (strain JF-5).